The chain runs to 272 residues: ATP synthase subunit delta (272 aa).

Belongs to the ATPase delta chain family. As to quaternary structure, F-type ATPases have 2 components, F(1) - the catalytic core - and F(0) - the membrane proton channel. F(1) has five subunits: alpha(3), beta(3), gamma(1), delta(1), epsilon(1). F(0) has three main subunits: a(1), b(2) and c(10-14). The alpha and beta chains form an alternating ring which encloses part of the gamma chain. F(1) is attached to F(0) by a central stalk formed by the gamma and epsilon chains, while a peripheral stalk is formed by the delta and b chains.

Its subcellular location is the cell membrane. In terms of biological role, f(1)F(0) ATP synthase produces ATP from ADP in the presence of a proton or sodium gradient. F-type ATPases consist of two structural domains, F(1) containing the extramembraneous catalytic core and F(0) containing the membrane proton channel, linked together by a central stalk and a peripheral stalk. During catalysis, ATP synthesis in the catalytic domain of F(1) is coupled via a rotary mechanism of the central stalk subunits to proton translocation. This protein is part of the stalk that links CF(0) to CF(1). It either transmits conformational changes from CF(0) to CF(1) or is implicated in proton conduction. The polypeptide is ATP synthase subunit delta (Corynebacterium jeikeium (strain K411)).